The chain runs to 388 residues: 4-hydroxy-3-methylbut-2-en-1-yl diphosphate synthase (flavodoxin) (388 aa).

The [4Fe-4S] cluster site is built by C280, C283, C315, and E322. Residues 369–388 form a disordered region; that stretch reads MNSEGGPEATSSGSPVVTVS. The span at 377 to 388 shows a compositional bias: polar residues; the sequence is ATSSGSPVVTVS.

The protein belongs to the IspG family. The cofactor is [4Fe-4S] cluster.

It carries out the reaction (2E)-4-hydroxy-3-methylbut-2-enyl diphosphate + oxidized [flavodoxin] + H2O + 2 H(+) = 2-C-methyl-D-erythritol 2,4-cyclic diphosphate + reduced [flavodoxin]. The protein operates within isoprenoid biosynthesis; isopentenyl diphosphate biosynthesis via DXP pathway; isopentenyl diphosphate from 1-deoxy-D-xylulose 5-phosphate: step 5/6. Converts 2C-methyl-D-erythritol 2,4-cyclodiphosphate (ME-2,4cPP) into 1-hydroxy-2-methyl-2-(E)-butenyl 4-diphosphate. This Mycolicibacterium paratuberculosis (strain ATCC BAA-968 / K-10) (Mycobacterium paratuberculosis) protein is 4-hydroxy-3-methylbut-2-en-1-yl diphosphate synthase (flavodoxin).